Consider the following 58-residue polypeptide: uncharacterized protein (58 aa).

4Fe-4S ferredoxin-type domains are found at residues 2–27 (GIKI…IKTY) and 28–57 (GVAI…VDTS). Positions 9, 12, 15, 19, 37, 40, 43, and 47 each coordinate [4Fe-4S] cluster.

The cofactor is [4Fe-4S] cluster.

Functionally, ferredoxins are iron-sulfur proteins that transfer electrons probably in the CO-dehydrogenase complex. This is an uncharacterized protein from Methanocaldococcus jannaschii (strain ATCC 43067 / DSM 2661 / JAL-1 / JCM 10045 / NBRC 100440) (Methanococcus jannaschii).